The primary structure comprises 560 residues: Choline/ethanolamine transporter FLVCR1 (560 aa).

Positions 1-43 are disordered; sequence MARPDDEVGPAVAPGHPLGKGYLPVPKGAPDGEARLVPQNGPE. At 1–92 the chain is on the cytoplasmic side; the sequence is MARPDDEVGP…EDVPCPACPP (92 aa). The helical transmembrane segment at 93-117 threads the bilayer; the sequence is RTALSPRRFVVLLIFSLYSLVNAFQ. Residues 118 to 135 lie on the Extracellular side of the membrane; that stretch reads WIQYSSISNVFEDFYEVS. A helical transmembrane segment spans residues 136–163; that stretch reads PLHINWLSMVYMVAYVPLIFPATWLLDT. Residues 164–165 are Cytoplasmic-facing; the sequence is RG. A helical membrane pass occupies residues 166–185; it reads LRLTALLGSGLNCLGAWVKC. The Extracellular portion of the chain corresponds to 186–192; that stretch reads GSVQRHL. The helical transmembrane segment at 193-221 threads the bilayer; it reads FWVTMLGQILCSVAQVFILGLPSPVASVW. Gln-207 is a binding site for ethanolamine. The Cytoplasmic portion of the chain corresponds to 222-226; sequence FGPKE. The helical transmembrane segment at 227 to 252 threads the bilayer; it reads VSTACATAVLGNQLGTAVGFLLPPVL. The Extracellular portion of the chain corresponds to 253-270; the sequence is VPALGTQNSTGLLAHTQN. N-linked (GlcNAc...) asparagine glycosylation is present at Asn-270. Residues 271-300 form a helical membrane-spanning segment; the sequence is NTDLLAHNINTMFYGTAFISTFLFFLTIIA. Residues 301–336 are Cytoplasmic-facing; that stretch reads FKEKPPLPPSQAQAVLRDSPPEEYSYKSSIWNLCRN. Residues 337-367 traverse the membrane as a helical segment; that stretch reads IPFVLLLVSYGIMTGAFYSISTLLNQIILTY. Residues 368-371 lie on the Extracellular side of the membrane; sequence YVGE. The helical transmembrane segment at 372–400 threads the bilayer; that stretch reads EVNAGRIGLTLVVAGMVGSILCGLWLDYT. At 401–402 the chain is on the cytoplasmic side; that stretch reads KT. The chain crosses the membrane as a helical span at residues 403 to 425; it reads YKQTTLIVYVLSFIGMLIFTFTL. Residues 426–428 lie on the Extracellular side of the membrane; it reads NLG. A helical membrane pass occupies residues 429–458; it reads YIIVVFFTGGILGFFMTGYLPLGFEFAVEI. Topologically, residues 459–466 are cytoplasmic; that stretch reads TYPESEGM. The helical transmembrane segment at 467-492 threads the bilayer; it reads SSGLLNTAAQILGIFFTLAQGKITTD. Position 476 (Gln-476) interacts with ethanolamine. A choline-binding site is contributed by Gln-476. Topologically, residues 493-495 are extracellular; the sequence is YNS. Residues 496–518 form a helical membrane-spanning segment; sequence PEAGNIFLCAWMFVGIILTALIK. Residues 519–560 lie on the Cytoplasmic side of the membrane; sequence SDLRRHNINTGLTNIDVKAVPVDSRVDPKPKVMVSIQSESSL. At Ser-542 the chain carries Phosphoserine.

It belongs to the major facilitator superfamily. Feline leukemia virus subgroup C receptor (TC 2.A.1.28.1) family.

Its subcellular location is the cell membrane. It localises to the mitochondrion membrane. The enzyme catalyses choline(out) = choline(in). It carries out the reaction ethanolamine(in) = ethanolamine(out). It catalyses the reaction heme b(in) = heme b(out). Uniporter that mediates the transport of extracellular choline and ethanolamine into cells, thereby playing a key role in phospholipid biosynthesis. Choline and ethanolamine are the precursors of phosphatidylcholine and phosphatidylethanolamine, respectively, the two most abundant phospholipids. Transport is not coupled with proton transport and is exclusively driven by the choline (or ethanolamine) gradient across the plasma membrane. Also acts as a heme b transporter that mediates heme efflux from the cytoplasm to the extracellular compartment. Functionally, uniporter that mediates the transport of extracellular choline and ethanolamine into cells. Choline and ethanolamine are the precursors of phosphatidylcholine and phosphatidylethanolamine, respectively, the two most abundant phospholipids. Transport is not coupled with proton transport and is exclusively driven by the choline (or ethanolamine) gradient across the plasma membrane. Also acts as a heme b transporter that mediates heme efflux from the cytoplasm to the extracellular compartment. Heme export depends on the presence of HPX and is required to maintain intracellular free heme balance, protecting cells from heme toxicity. Heme export provides protection from heme or ferrous iron toxicities in liver, brain, sensory neurons and during erythropoiesis, a process in which heme synthesis intensifies. Possibly export coproporphyrin and protoporphyrin IX, which are both intermediate products in the heme biosynthetic pathway. Does not export bilirubin. The molecular mechanism of heme transport, whether electrogenic, electroneutral or coupled to other ions, remains to be elucidated. Its function is as follows. Heme transporter that promotes heme efflux from the mitochondrion to the cytoplasm. Essential for erythroid differentiation. In Mus musculus (Mouse), this protein is Choline/ethanolamine transporter FLVCR1 (Flvcr1).